The sequence spans 557 residues: 2-succinyl-5-enolpyruvyl-6-hydroxy-3-cyclohexene-1-carboxylate synthase (557 aa).

Belongs to the TPP enzyme family. MenD subfamily. Homodimer. Mg(2+) serves as cofactor. The cofactor is Mn(2+). Requires thiamine diphosphate as cofactor.

The enzyme catalyses isochorismate + 2-oxoglutarate + H(+) = 5-enolpyruvoyl-6-hydroxy-2-succinyl-cyclohex-3-ene-1-carboxylate + CO2. Its pathway is quinol/quinone metabolism; 1,4-dihydroxy-2-naphthoate biosynthesis; 1,4-dihydroxy-2-naphthoate from chorismate: step 2/7. It participates in quinol/quinone metabolism; menaquinone biosynthesis. Catalyzes the thiamine diphosphate-dependent decarboxylation of 2-oxoglutarate and the subsequent addition of the resulting succinic semialdehyde-thiamine pyrophosphate anion to isochorismate to yield 2-succinyl-5-enolpyruvyl-6-hydroxy-3-cyclohexene-1-carboxylate (SEPHCHC). This Serratia proteamaculans (strain 568) protein is 2-succinyl-5-enolpyruvyl-6-hydroxy-3-cyclohexene-1-carboxylate synthase.